Reading from the N-terminus, the 173-residue chain is Pyrimidine operon regulatory protein (173 aa).

Residues T40–R41, D97–T105, and R130 each bind substrate. The short motif at V93–T105 is the PRPP-binding element.

It belongs to the purine/pyrimidine phosphoribosyltransferase family. PyrR subfamily.

In terms of biological role, regulates transcriptional attenuation of the pyrimidine nucleotide (pyr) operon in response to exogenous pyrimidines, probably by binding to specific sites on pyr mRNA. This probably disrupts an antiterminator hairpin in the RNA and favors formation of a downstream transcription terminator, leading to a reduced expression of downstream genes. The polypeptide is Pyrimidine operon regulatory protein (Lactococcus lactis subsp. lactis (strain IL1403) (Streptococcus lactis)).